Here is a 602-residue protein sequence, read N- to C-terminus: Aspartate--tRNA(Asp/Asn) ligase (602 aa).

Residue glutamate 175 coordinates L-aspartate. The segment at 199–202 (QIFK) is aspartate. Position 221 (arginine 221) interacts with L-aspartate. ATP contacts are provided by residues 221–223 (RDE) and glutamine 230. Histidine 458 serves as a coordination point for L-aspartate. Position 492 (glutamate 492) interacts with ATP. Arginine 499 provides a ligand contact to L-aspartate. Position 544 to 547 (544 to 547 (GLDR)) interacts with ATP.

It belongs to the class-II aminoacyl-tRNA synthetase family. Type 1 subfamily. As to quaternary structure, homodimer.

It is found in the cytoplasm. The catalysed reaction is tRNA(Asx) + L-aspartate + ATP = L-aspartyl-tRNA(Asx) + AMP + diphosphate. Functionally, aspartyl-tRNA synthetase with relaxed tRNA specificity since it is able to aspartylate not only its cognate tRNA(Asp) but also tRNA(Asn). Reaction proceeds in two steps: L-aspartate is first activated by ATP to form Asp-AMP and then transferred to the acceptor end of tRNA(Asp/Asn). The polypeptide is Aspartate--tRNA(Asp/Asn) ligase (Cupriavidus necator (strain ATCC 17699 / DSM 428 / KCTC 22496 / NCIMB 10442 / H16 / Stanier 337) (Ralstonia eutropha)).